The following is a 465-amino-acid chain: Phosphatidylserine synthase 1 (465 aa).

Residues 1–35 (MATTFRSQTLSKDDVNYRMHFRMINEQQVEDITIQ) lie on the Cytoplasmic side of the membrane. Residues 36 to 56 (FFYKPHTISLLTVTVLSLMYF) traverse the membrane as a helical segment. Residues 57–70 (AFTRDDGDPDSNLR) lie on the Lumenal side of the membrane. A helical membrane pass occupies residues 71–91 (VGLILLVSFFLVISVLAFPNG). The Cytoplasmic portion of the chain corresponds to 92–102 (PFTRPHPAIWR). A helical transmembrane segment spans residues 103–123 (IVFGLSVLYFLFLVFIIFLNW). Topologically, residues 124–286 (DQVKALMFWL…WLDPKSSLQR (163 aa)) are lumenal. Residues 287–307 (VMGVYLFMIIWQLTELNTFFL) form a helical membrane-spanning segment. Residues 308–309 (KH) lie on the Cytoplasmic side of the membrane. Residues 310 to 330 (IFVFPACHALSWCRILFIGII) traverse the membrane as a helical segment. The Lumenal portion of the chain corresponds to 331–355 (TAPTVRQYYAYLTDTQCKRVGTQCW). A helical transmembrane segment spans residues 356-376 (VFGAIAFLEALACIKFGQDLF). Over 377-380 (SKTQ) the chain is Cytoplasmic. The chain crosses the membrane as a helical span at residues 381–401 (ILYVILWLVCLAFITFLCLYV). At 402–465 (MVWYAENYGP…DSRTINGMEK (64 aa)) the chain is on the lumenal side. The interval 446-465 (CSTRKRRDSGDSRTINGMEK) is disordered.

The protein belongs to the phosphatidyl serine synthase family.

It is found in the endoplasmic reticulum membrane. The enzyme catalyses a 1,2-diacyl-sn-glycero-3-phosphoethanolamine + L-serine = a 1,2-diacyl-sn-glycero-3-phospho-L-serine + ethanolamine. It carries out the reaction a 1,2-diacyl-sn-glycero-3-phosphocholine + L-serine = a 1,2-diacyl-sn-glycero-3-phospho-L-serine + choline. The protein operates within phospholipid metabolism; phosphatidylserine biosynthesis. Catalyzes a base-exchange reaction in which the polar head group of phosphatidylethanolamine (PE) or phosphatidylcholine (PC) is replaced by L-serine. Catalyzes mainly the conversion of phosphatidylcholine but also converts, in vitro and to a lesser extent, phosphatidylethanolamine. The protein is Phosphatidylserine synthase 1 (ptdss1) of Danio rerio (Zebrafish).